The primary structure comprises 353 residues: UDP-N-acetylglucosamine--N-acetylmuramyl-(pentapeptide) pyrophosphoryl-undecaprenol N-acetylglucosamine transferase (353 aa).

UDP-N-acetyl-alpha-D-glucosamine contacts are provided by residues 10–12, Asn-124, Ser-183, and Gln-283; that span reads TGG.

The protein belongs to the glycosyltransferase 28 family. MurG subfamily.

Its subcellular location is the cell inner membrane. It catalyses the reaction di-trans,octa-cis-undecaprenyl diphospho-N-acetyl-alpha-D-muramoyl-L-alanyl-D-glutamyl-meso-2,6-diaminopimeloyl-D-alanyl-D-alanine + UDP-N-acetyl-alpha-D-glucosamine = di-trans,octa-cis-undecaprenyl diphospho-[N-acetyl-alpha-D-glucosaminyl-(1-&gt;4)]-N-acetyl-alpha-D-muramoyl-L-alanyl-D-glutamyl-meso-2,6-diaminopimeloyl-D-alanyl-D-alanine + UDP + H(+). It participates in cell wall biogenesis; peptidoglycan biosynthesis. Its function is as follows. Cell wall formation. Catalyzes the transfer of a GlcNAc subunit on undecaprenyl-pyrophosphoryl-MurNAc-pentapeptide (lipid intermediate I) to form undecaprenyl-pyrophosphoryl-MurNAc-(pentapeptide)GlcNAc (lipid intermediate II). The sequence is that of UDP-N-acetylglucosamine--N-acetylmuramyl-(pentapeptide) pyrophosphoryl-undecaprenol N-acetylglucosamine transferase from Helicobacter acinonychis (strain Sheeba).